A 473-amino-acid chain; its full sequence is H(+)/Cl(-) exchange transporter ClcA (473 aa).

At 1–32 the chain is on the cytoplasmic side; that stretch reads MKTDTPSLETPQAARLRRRQLIRQLLERDKTP. A helical transmembrane segment spans residues 33 to 69; the sequence is LAILFMAAVVGTLVGLAAVAFDKGVAWLQNQRMGALV. At 70 to 76 the chain is on the periplasmic side; that stretch reads HTADNYP. Residues 77–100 form a helical membrane-spanning segment; it reads LLLTVAFLCSAVLAMFGYFLVRKY. The Selectivity filter part_1 signature appears at 106–110; that stretch reads GSGIP. Serine 107 serves as a coordination point for chloride. Positions 109 to 116 form an intramembrane region, helical; that stretch reads IPEIEGAL. Residues 117-123 lie on the Cytoplasmic side of the membrane; sequence EDQRPVR. A run of 2 helical transmembrane segments spans residues 124–141 and 148–166; these read WWRV…TLGG and EGPT…LDIF. A Selectivity filter part_2 motif is present at residues 146–150; that stretch reads GREGP. Residues 167–176 are Cytoplasmic-facing; it reads RLKGDEARHT. 2 consecutive intramembrane regions (helical) follow at residues 177–189 and 193–201; these read LLAT…LAAA and PLAGILFII. Over 202–214 the chain is Cytoplasmic; sequence EEMRPQFRYTLIS. A helical membrane pass occupies residues 215–232; it reads IKAVFIGVIMSTIMYRIF. At 233–252 the chain is on the periplasmic side; sequence NHEVALIDVGKLSDAPLNTL. Residues 253 to 281 traverse the membrane as a helical segment; it reads WLYLILGIIFGIFGPIFNKWVLGMQDLLH. Residues 282 to 287 lie on the Cytoplasmic side of the membrane; it reads RVHGGN. A helical transmembrane segment spans residues 288-309; that stretch reads ITKWVLMGGAIGGLCGLLGFVA. Residues 310-329 lie on the Periplasmic side of the membrane; sequence PATSGGGFNLIPIATAGNFS. A run of 2 helical transmembrane segments spans residues 330-349 and 355-376; these read MGML…LCFS and GIFA…MVAV. Residues 355-359 carry the Selectivity filter part_3 motif; it reads GIFAP. 2 residues coordinate chloride: isoleucine 356 and phenylalanine 357. The Periplasmic segment spans residues 377 to 386; the sequence is ELFPQYHLEA. An intramembrane region (helical) is located at residues 387–401; sequence GTFAIAGMGALLAAS. An intramembrane region (note=Loop between two helices) is located at residues 402–404; the sequence is IRA. Positions 405-416 form an intramembrane region, helical; that stretch reads PLTGIILVLEMT. An intramembrane region (note=Loop between two helices) is located at residues 417-421; sequence DNYQL. Residues 422 to 438 form a helical membrane-spanning segment; sequence ILPMIITGLGATLLAQF. Over 439 to 473 the chain is Cytoplasmic; the sequence is TGGKPLYSAILARTLAKQEAEQLARSKAASASENT. Position 445 (tyrosine 445) interacts with chloride.

Belongs to the chloride channel (TC 2.A.49) family. ClcA subfamily. As to quaternary structure, homodimer.

It localises to the cell inner membrane. The catalysed reaction is 2 chloride(in) + H(+)(out) = 2 chloride(out) + H(+)(in). Its function is as follows. Proton-coupled chloride transporter. Functions as antiport system and exchanges two chloride ions for 1 proton. Probably acts as an electrical shunt for an outwardly-directed proton pump that is linked to amino acid decarboxylation, as part of the extreme acid resistance (XAR) response. This Shigella flexneri serotype 5b (strain 8401) protein is H(+)/Cl(-) exchange transporter ClcA.